The following is a 347-amino-acid chain: Heat-inducible transcription repressor HrcA (347 aa).

This sequence belongs to the HrcA family.

Its function is as follows. Negative regulator of class I heat shock genes (grpE-dnaK-dnaJ and groELS operons). Prevents heat-shock induction of these operons. In Lactococcus lactis subsp. cremoris (strain MG1363), this protein is Heat-inducible transcription repressor HrcA.